The sequence spans 363 residues: NAD(P)H-quinone oxidoreductase subunit 1, chloroplastic (363 aa).

6 consecutive transmembrane segments (helical) span residues 30-50 (LVPILTLVLGITIGVLVIVWL), 98-118 (FSIGPAIAVISILLSFSVIPF), 129-149 (IGIFLWIAISSIAPVGLLMSG), 248-268 (YSGIKFGLFYVASYLNLLLSS), 300-320 (IIGTTIGIFITLAKTYLFLFI), and 343-363 (FLLPISLGNLLLTTSFQLLSL).

Belongs to the complex I subunit 1 family. As to quaternary structure, NDH is composed of at least 16 different subunits, 5 of which are encoded in the nucleus.

It is found in the plastid. The protein resides in the chloroplast thylakoid membrane. The enzyme catalyses a plastoquinone + NADH + (n+1) H(+)(in) = a plastoquinol + NAD(+) + n H(+)(out). The catalysed reaction is a plastoquinone + NADPH + (n+1) H(+)(in) = a plastoquinol + NADP(+) + n H(+)(out). Functionally, NDH shuttles electrons from NAD(P)H:plastoquinone, via FMN and iron-sulfur (Fe-S) centers, to quinones in the photosynthetic chain and possibly in a chloroplast respiratory chain. The immediate electron acceptor for the enzyme in this species is believed to be plastoquinone. Couples the redox reaction to proton translocation, and thus conserves the redox energy in a proton gradient. The sequence is that of NAD(P)H-quinone oxidoreductase subunit 1, chloroplastic from Gossypium hirsutum (Upland cotton).